The sequence spans 154 residues: Urease accessory protein UreE (154 aa).

This sequence belongs to the UreE family.

The protein localises to the cytoplasm. Involved in urease metallocenter assembly. Binds nickel. Probably functions as a nickel donor during metallocenter assembly. The polypeptide is Urease accessory protein UreE (Rhizobium meliloti (strain 1021) (Ensifer meliloti)).